We begin with the raw amino-acid sequence, 381 residues long: 3-dehydroquinate synthase (381 aa).

Residues glutamate 81–lysine 86, glycine 115–aspartate 119, threonine 139–serine 140, lysine 152, and lysine 161 each bind NAD(+). Positions 194, 256, and 274 each coordinate Zn(2+).

Belongs to the sugar phosphate cyclases superfamily. Dehydroquinate synthase family. Co(2+) serves as cofactor. Requires Zn(2+) as cofactor. It depends on NAD(+) as a cofactor.

The protein resides in the cytoplasm. The enzyme catalyses 7-phospho-2-dehydro-3-deoxy-D-arabino-heptonate = 3-dehydroquinate + phosphate. The protein operates within metabolic intermediate biosynthesis; chorismate biosynthesis; chorismate from D-erythrose 4-phosphate and phosphoenolpyruvate: step 2/7. In terms of biological role, catalyzes the conversion of 3-deoxy-D-arabino-heptulosonate 7-phosphate (DAHP) to dehydroquinate (DHQ). This chain is 3-dehydroquinate synthase, found in Rhodopseudomonas palustris (strain ATCC BAA-98 / CGA009).